The following is a 113-amino-acid chain: ATFSEAPPGDPKAGEKIFKTKCAZCHTVZKGAGHKQGPNLHGLFGRQSGTTAGYSYSTGNKNKAVNWGZZTLYEYLLNPKKYIPGTKMVFPGLKKPZZRADLISYLKQATSQE.

Alanine 1 carries the post-translational modification N-acetylalanine. Cysteine 22, cysteine 25, and histidine 26 together coordinate heme c. The residue at position 80 (lysine 80) is an N6,N6,N6-trimethyllysine. Methionine 88 contacts heme c. Lysine 94 carries the post-translational modification N6,N6,N6-trimethyllysine.

It belongs to the cytochrome c family. Binds 1 heme c group covalently per subunit.

It localises to the mitochondrion intermembrane space. Electron carrier protein. The oxidized form of the cytochrome c heme group can accept an electron from the heme group of the cytochrome c1 subunit of cytochrome reductase. Cytochrome c then transfers this electron to the cytochrome oxidase complex, the final protein carrier in the mitochondrial electron-transport chain. This Ginkgo biloba (Ginkgo) protein is Cytochrome c.